The chain runs to 2014 residues: Leucine-rich repeat serine/threonine-protein kinase 1 (2014 aa).

ANK repeat units follow at residues 51 to 81 (QCPS…CEES), 86 to 116 (EKGQ…ELPT), 119 to 148 (TDDN…GPCT), 152 to 182 (LLNW…DPEN), and 193 to 222 (IVRL…YFCS). LRR repeat units follow at residues 279 to 300 (QITE…IPWG), 303 to 324 (NLKK…QSSD), 330 to 351 (RLLE…FLHL), 353 to 374 (KLQK…ENAT), 381 to 402 (KLQE…FMHS), 405 to 426 (SLTS…WSCP), 427 to 447 (LKCC…MAVF), 451 to 472 (HLRD…LFQL), 474 to 495 (ALMF…EKWT), 498 to 519 (QLKT…LKTK), 549 to 570 (SLEV…VCLL), 572 to 594 (NLSE…LGQL), and 596 to 617 (NLWQ…VRKE). The Roc domain occupies 632-826 (KAEKCKLMKM…QLIFHVTCNM (195 aa)). GDP is bound by residues Pro-647, Arg-648, Gly-650, Lys-651, Ser-652, Thr-653, Glu-670, His-758, Asp-760, Cys-806, and Lys-807. Residues 840–1237 (GRLIPRSYIS…PARLFLENSK (398 aa)) enclose the COR domain. A Phosphothreonine modification is found at Thr-1061. Phosphoserine occurs at positions 1064 and 1074. A Phosphothreonine modification is found at Thr-1075. Residues 1242-1525 (EGENSILGQG…VVSQMKDPTF (284 aa)) form the Protein kinase domain. Residues 1248–1256 (LGQGGSGTV) and Lys-1270 contribute to the ATP site. The active-site Proton acceptor is Asp-1386. WD repeat units follow at residues 1539-1579 (AFFS…RMTC), 1582-1622 (MKLS…QALD), 1623-1668 (TPAV…SCSY), 1693-1729 (VKAM…RLEP), 1730-1778 (YAAP…YFCG), 1779-1948 (DPNP…AVLK), and 1950-1986 (RELN…AVWR). Positions 1791–1906 (PSVLETPGSH…MDGETFSQHL (116 aa)) are WD40 loop; involved in dimer stabilization. Residues 1839-1895 (SMSSYSSSPPHQDPRSPSSLPSSLTSYSSVPFSANYEDSDRLQEPSVTSDRTEHDLS) form a disordered region. Residues 1853-1871 (RSPSSLPSSLTSYSSVPFS) are compositionally biased toward low complexity.

It belongs to the protein kinase superfamily. TKL Ser/Thr protein kinase family. ROCO subfamily. In terms of assembly, homodimer. The homodimer is autoinhibited and stabilized by its N-terminal residues and ANK repeats. Interacts with CSK. It depends on Mg(2+) as a cofactor. Mn(2+) serves as cofactor. Post-translationally, autophosphorylated. Autophosphorylation in inhibited in its dimeric state. Phosphorylated by protein kinase C isozymes PRKCA, PRKCB, PRKCG, PRKCE, PRKCZ and PRKCT at Ser-1064, Ser-1074 and Thr-1075. Phosphorylation at these residues activates the kinase activity of LRRK1 to phosphorylate RAB7A. In terms of tissue distribution, expressed in osteoclasts and bone marrow stromal cells.

It localises to the cytoplasm. It is found in the cell membrane. It catalyses the reaction L-seryl-[protein] + ATP = O-phospho-L-seryl-[protein] + ADP + H(+). The catalysed reaction is L-threonyl-[protein] + ATP = O-phospho-L-threonyl-[protein] + ADP + H(+). With respect to regulation, activated by phosphorylation by PKC. Binds both GTP and GDP; binding of GTP stimulates kinase activity. Sterically autoinhibited in its dimeric state. Functionally, serine/threonine-protein kinase which phosphorylates RAB proteins involved in intracellular trafficking. Phosphorylates RAB7A; this activity is dependent on protein kinase C (PKC) activation. Plays a role in the negative regulation of bone mass, acting through the maturation of osteoclasts. This Mus musculus (Mouse) protein is Leucine-rich repeat serine/threonine-protein kinase 1.